An 81-amino-acid polypeptide reads, in one-letter code: Exodeoxyribonuclease 7 small subunit (81 aa).

The protein belongs to the XseB family. As to quaternary structure, heterooligomer composed of large and small subunits.

The protein localises to the cytoplasm. It catalyses the reaction Exonucleolytic cleavage in either 5'- to 3'- or 3'- to 5'-direction to yield nucleoside 5'-phosphates.. Bidirectionally degrades single-stranded DNA into large acid-insoluble oligonucleotides, which are then degraded further into small acid-soluble oligonucleotides. The polypeptide is Exodeoxyribonuclease 7 small subunit (Pseudomonas syringae pv. syringae (strain B728a)).